The chain runs to 226 residues: Ras-related protein RGP1 (226 aa).

Residue 25 to 32 (GDSAVGKS) participates in GTP binding. Residues 47–55 (SKATIGVEF) carry the Effector region motif. GTP contacts are provided by residues 73 to 77 (DTAGQ) and 131 to 134 (NKSD). 2 S-geranylgeranyl cysteine lipidation sites follow: Cys-223 and Cys-224.

This sequence belongs to the small GTPase superfamily. Rab family.

It is found in the cell membrane. In terms of biological role, may play an important role in plant growth and development. This is Ras-related protein RGP1 (RGP1) from Oryza sativa subsp. japonica (Rice).